Here is a 161-residue protein sequence, read N- to C-terminus: Cyclic pyranopterin monophosphate synthase (161 aa).

Substrate contacts are provided by residues 75 to 77 (LCH) and 113 to 114 (ME). Asp-128 is a catalytic residue.

This sequence belongs to the MoaC family. As to quaternary structure, homohexamer; trimer of dimers.

The enzyme catalyses (8S)-3',8-cyclo-7,8-dihydroguanosine 5'-triphosphate = cyclic pyranopterin phosphate + diphosphate. It functions in the pathway cofactor biosynthesis; molybdopterin biosynthesis. Its function is as follows. Catalyzes the conversion of (8S)-3',8-cyclo-7,8-dihydroguanosine 5'-triphosphate to cyclic pyranopterin monophosphate (cPMP). The protein is Cyclic pyranopterin monophosphate synthase of Erwinia tasmaniensis (strain DSM 17950 / CFBP 7177 / CIP 109463 / NCPPB 4357 / Et1/99).